We begin with the raw amino-acid sequence, 308 residues long: UPF0282 protein M1425_2116 (308 aa).

It belongs to the UPF0282 family.

The protein is UPF0282 protein M1425_2116 of Saccharolobus islandicus (strain M.14.25 / Kamchatka #1) (Sulfolobus islandicus).